The chain runs to 254 residues: Thiazole synthase (254 aa).

The active-site Schiff-base intermediate with DXP is Lys96. 1-deoxy-D-xylulose 5-phosphate is bound by residues Gly157, 183–184, and 205–206; these read AG and NT.

Belongs to the ThiG family. In terms of assembly, homotetramer. Forms heterodimers with either ThiH or ThiS.

It localises to the cytoplasm. It carries out the reaction [ThiS sulfur-carrier protein]-C-terminal-Gly-aminoethanethioate + 2-iminoacetate + 1-deoxy-D-xylulose 5-phosphate = [ThiS sulfur-carrier protein]-C-terminal Gly-Gly + 2-[(2R,5Z)-2-carboxy-4-methylthiazol-5(2H)-ylidene]ethyl phosphate + 2 H2O + H(+). It functions in the pathway cofactor biosynthesis; thiamine diphosphate biosynthesis. Functionally, catalyzes the rearrangement of 1-deoxy-D-xylulose 5-phosphate (DXP) to produce the thiazole phosphate moiety of thiamine. Sulfur is provided by the thiocarboxylate moiety of the carrier protein ThiS. In vitro, sulfur can be provided by H(2)S. This chain is Thiazole synthase, found in Clostridium kluyveri (strain ATCC 8527 / DSM 555 / NBRC 12016 / NCIMB 10680 / K1).